The sequence spans 83 residues: U5-theraphotoxin-Hs1a 3 (83 aa).

The N-terminal stretch at 1–21 (MKTSMFLTLTGLVLLFVVCYA) is a signal peptide. Positions 22–49 (SESEEKDFPKELLSSIFAADSDFKVEER) are excised as a propeptide. Disulfide bonds link Cys-51–Cys-63, Cys-56–Cys-68, and Cys-62–Cys-75.

Belongs to the neurotoxin 10 (Hwtx-1) family. 51 (Hntx-8) subfamily. Hntx-8 sub-subfamily. In terms of tissue distribution, expressed by the venom gland.

Its subcellular location is the secreted. In terms of biological role, agglutinates erythrocytes. The protein is U5-theraphotoxin-Hs1a 3 of Cyriopagopus schmidti (Chinese bird spider).